The chain runs to 243 residues: DNA repair protein RecO (243 aa).

This sequence belongs to the RecO family.

Functionally, involved in DNA repair and RecF pathway recombination. This Thermobifida fusca (strain YX) protein is DNA repair protein RecO.